A 333-amino-acid chain; its full sequence is MSEYQSIGVIGAGAWGTALAQTAAKAGRDVTLWSFENDVAEAVNTKHENTIYLPDVALSTAIVATTSISDLDACDAILAVAPAQHLRRVLEGFLPYARPGLPIVLCAKGIEQSSLSMMTQVLKETIPAALPAVLSGPSFAIDTAQGLPTAVTLACADETVGNALIEALGTSRFRPYLATDLIGAEIGGAVKNVLAIGCGISEGKGLGKSAHAALISRGFAEMTRLALALGAQRETLAGLCGLGDLVLTCSSPQSRNMSCGLALGRGVSLDDIMSGRRAVTEGVASAPAVVELARRHGVEMPICEAVNEILAGRASVDDAIETLLARPFTLETA.

2 residues coordinate NADPH: W15 and K108. Sn-glycerol 3-phosphate is bound by residues K108, G136, and S138. A140 serves as a coordination point for NADPH. Sn-glycerol 3-phosphate is bound by residues K191, D244, S254, R255, and N256. K191 (proton acceptor) is an active-site residue. R255 lines the NADPH pocket. NADPH contacts are provided by V279 and E281.

It belongs to the NAD-dependent glycerol-3-phosphate dehydrogenase family.

It localises to the cytoplasm. It catalyses the reaction sn-glycerol 3-phosphate + NAD(+) = dihydroxyacetone phosphate + NADH + H(+). The enzyme catalyses sn-glycerol 3-phosphate + NADP(+) = dihydroxyacetone phosphate + NADPH + H(+). The protein operates within membrane lipid metabolism; glycerophospholipid metabolism. Functionally, catalyzes the reduction of the glycolytic intermediate dihydroxyacetone phosphate (DHAP) to sn-glycerol 3-phosphate (G3P), the key precursor for phospholipid synthesis. The chain is Glycerol-3-phosphate dehydrogenase [NAD(P)+] from Maricaulis maris (strain MCS10) (Caulobacter maris).